We begin with the raw amino-acid sequence, 290 residues long: UBX domain-containing protein 1-B (290 aa).

One can recognise a UBA domain in the interval 1–42; sequence MADCSALESLIEMGFSPSRAEKALSATGNQGIEPAMDWLVEH. A disordered region spans residues 49-210; sequence KEPSVVIPED…VQEPPTKKEY (162 aa). 2 stretches are compositionally biased toward basic and acidic residues: residues 80-117 and 132-172; these read PLTE…EQEK and RMQE…DRAR. Residues 81 to 171 are a coiled coil; the sequence is LTEEEKEKQT…KIARDKADRA (91 aa). Residues 185-201 show a composition bias toward low complexity; sequence PAETSVPATAPSPSSPV. The UBX domain maps to 208-287; that stretch reads KEYDQCRIQV…GLVPTAVLIV (80 aa).

The protein resides in the cytoplasm. Its function is as follows. Component of a complex required to couple deglycosylation and proteasome-mediated degradation of misfolded proteins in the endoplasmic reticulum that are retrotranslocated in the cytosol. Involved in ubiquitin-proteasome systems. This chain is UBX domain-containing protein 1-B (ubxn1-b), found in Xenopus laevis (African clawed frog).